A 412-amino-acid polypeptide reads, in one-letter code: Subtilisin-like protease 6 (412 aa).

A signal peptide spans 1-20; the sequence is MGFITKAIPIVLAALSTVNG. The propeptide occupies 21 to 127; the sequence is ARILEAGPHA…VRTTTNGTNL (107 aa). Positions 36 to 120 constitute an Inhibitor I9 domain; the sequence is KYIVVMKKDV…FIEPDFVVRT (85 aa). In terms of domain architecture, Peptidase S8 spans 135–412; the sequence is SWGLARVGSK…SKLIYNGSGK (278 aa). Catalysis depends on charge relay system residues aspartate 167 and histidine 198. Asparagine 252 and asparagine 264 each carry an N-linked (GlcNAc...) asparagine glycan. Serine 358 acts as the Charge relay system in catalysis. Asparagine 408 carries N-linked (GlcNAc...) asparagine glycosylation.

It belongs to the peptidase S8 family.

It is found in the secreted. Its function is as follows. Secreted subtilisin-like serine protease with keratinolytic activity that contributes to pathogenicity. The polypeptide is Subtilisin-like protease 6 (SUB6) (Arthroderma benhamiae (strain ATCC MYA-4681 / CBS 112371) (Trichophyton mentagrophytes)).